The sequence spans 225 residues: Ribonuclease 3 (225 aa).

The 123-residue stretch at 5-127 (IDKLERKLGY…IIGAIYLDSD (123 aa)) folds into the RNase III domain. E40 lines the Mg(2+) pocket. Residue D44 is part of the active site. Mg(2+) contacts are provided by D113 and E116. The active site involves E116. Residues 154 to 224 (DPKTRLQEFL…AETALEQLTN (71 aa)) enclose the DRBM domain.

Belongs to the ribonuclease III family. As to quaternary structure, homodimer. Requires Mg(2+) as cofactor.

The protein localises to the cytoplasm. The catalysed reaction is Endonucleolytic cleavage to 5'-phosphomonoester.. Its function is as follows. Digests double-stranded RNA. Involved in the processing of primary rRNA transcript to yield the immediate precursors to the large and small rRNAs (23S and 16S). Processes some mRNAs, and tRNAs when they are encoded in the rRNA operon. Processes pre-crRNA and tracrRNA of type II CRISPR loci if present in the organism. This chain is Ribonuclease 3, found in Vibrio campbellii (strain ATCC BAA-1116).